The sequence spans 203 residues: Holliday junction branch migration complex subunit RuvA (203 aa).

The interval 1–64 (MIGRLRGIIL…EDAQLLYGFN (64 aa)) is domain I. The segment at 65 to 142 (NKQERTLFKE…KGLHGDLFTP (78 aa)) is domain II. Positions 143-154 (AVDLVLTSPASP) are flexible linker. A domain III region spans residues 155 to 203 (GSEDAEQEAVAALVALGYKPQEASRMVSKIARPDASSETLIRDALRAAL).

Belongs to the RuvA family. In terms of assembly, homotetramer. Forms an RuvA(8)-RuvB(12)-Holliday junction (HJ) complex. HJ DNA is sandwiched between 2 RuvA tetramers; dsDNA enters through RuvA and exits via RuvB. An RuvB hexamer assembles on each DNA strand where it exits the tetramer. Each RuvB hexamer is contacted by two RuvA subunits (via domain III) on 2 adjacent RuvB subunits; this complex drives branch migration. In the full resolvosome a probable DNA-RuvA(4)-RuvB(12)-RuvC(2) complex forms which resolves the HJ.

Its subcellular location is the cytoplasm. Its function is as follows. The RuvA-RuvB-RuvC complex processes Holliday junction (HJ) DNA during genetic recombination and DNA repair, while the RuvA-RuvB complex plays an important role in the rescue of blocked DNA replication forks via replication fork reversal (RFR). RuvA specifically binds to HJ cruciform DNA, conferring on it an open structure. The RuvB hexamer acts as an ATP-dependent pump, pulling dsDNA into and through the RuvAB complex. HJ branch migration allows RuvC to scan DNA until it finds its consensus sequence, where it cleaves and resolves the cruciform DNA. The chain is Holliday junction branch migration complex subunit RuvA from Salmonella schwarzengrund (strain CVM19633).